A 425-amino-acid polypeptide reads, in one-letter code: Serine--tRNA ligase (425 aa).

Residue 228-230 (TAE) coordinates L-serine. Position 259-261 (259-261 (RSE)) interacts with ATP. Glutamate 282 contacts L-serine. 346–349 (EIAS) serves as a coordination point for ATP. An L-serine-binding site is contributed by serine 382.

The protein belongs to the class-II aminoacyl-tRNA synthetase family. Type-1 seryl-tRNA synthetase subfamily. As to quaternary structure, homodimer. The tRNA molecule binds across the dimer.

The protein localises to the cytoplasm. The catalysed reaction is tRNA(Ser) + L-serine + ATP = L-seryl-tRNA(Ser) + AMP + diphosphate + H(+). It carries out the reaction tRNA(Sec) + L-serine + ATP = L-seryl-tRNA(Sec) + AMP + diphosphate + H(+). The protein operates within aminoacyl-tRNA biosynthesis; selenocysteinyl-tRNA(Sec) biosynthesis; L-seryl-tRNA(Sec) from L-serine and tRNA(Sec): step 1/1. Catalyzes the attachment of serine to tRNA(Ser). Is also able to aminoacylate tRNA(Sec) with serine, to form the misacylated tRNA L-seryl-tRNA(Sec), which will be further converted into selenocysteinyl-tRNA(Sec). The sequence is that of Serine--tRNA ligase from Rickettsia peacockii (strain Rustic).